Reading from the N-terminus, the 40-residue chain is Antimicrobial peptide 1 (40 aa).

The region spanning 1–40 (AQCGAQGGGATCPGGLCCSQWGWCGSTPKYCGAGCQSNCK) is the Chitin-binding type-1 domain. 4 disulfides stabilise this stretch: Cys-3–Cys-18, Cys-12–Cys-24, Cys-17–Cys-31, and Cys-35–Cys-39.

Not glycosylated.

Its function is as follows. Antimicrobial peptide active against plant pathogenic fungi and Gram-negative and -positive bacteria. The protein is Antimicrobial peptide 1 of Fagopyrum esculentum (Common buckwheat).